We begin with the raw amino-acid sequence, 214 residues long: DNA-binding protein HupB (214 aa).

The residue at position 3 (Lys3) is an N6-acetyllysine. N6-succinyllysine is present on Lys3. A phosphothreonine mark is found at Thr43 and Thr45. N6-acetyllysine is present on residues Lys72, Lys86, and Lys103. Residues 100–214 (PAVKRGVGAS…KKATARRGRK (115 aa)) are disordered. The span at 102 to 112 (VKRGVGASAAK) shows a compositional bias: low complexity. Lys113 is modified (N6-succinyllysine). The segment covering 113–214 (KVAKKAPAKK…KKATARRGRK (102 aa)) has biased composition (basic residues). N6-acetyllysine occurs at positions 116 and 133. Lys142 is modified (N6-succinyllysine). Lys146 and Lys167 each carry N6-acetyllysine.

Belongs to the bacterial histone-like protein family. Long actinobacterial subfamily. As to quaternary structure, oligomerizes. Homodimer; the crystallized protein is missing the C-terminal 105 residues. Interacts with topoisomerase 1 (topA). Interacts with Eis. Interacts with NAD-dependent protein deacylase NPD (MRA_1161). Interacts with MRA_0812 CoA transferase. In terms of processing, phosphorylated in vivo on Ser and Thr-residues; the protein is degraded during purification so most sites were not identified, but at least one of Thr-43 and/or Thr-45 are modified in vivo. In vitro at least PknE, PknF and PknB phosphorylate HupB; PknE is the most active and phosphorylates many sites in vitro including Thr-43 and Thr-45. Acetylated on 8 Lys residues in vivo (probably by Eis). In vitro acetylated by Eis on 28 residues (strains H37Rv and H37Ra), many more than those identified in vivo. Also acetylated by MRA_0812. Deacetylated in vitro by NAD-dependent protein deacylase NPD (MRA_1161). Post-translationally, succinylated in vivo and in vitro by MRA_0812 and by Eis; only 3 residues are found to be succinylated in vivo, while 27 are modifed in vitro by MRA_0812 and 32 are succinylated by Eis. NAD-dependent protein deacylase (MRA_1161) desuccinylates this protein.

The protein localises to the cytoplasm. It localises to the nucleoid. The enzyme catalyses 4 Fe(2+) + O2 + 4 H(+) = 4 Fe(3+) + 2 H2O. Two trans-stilbene derivatives, 4,4'-[(E)-ethene-1,2 diylbis({5[(phenylcarbonyl)amino]benzene-2,1-diyl}sulfonylimino)] dibenzoic acid and its methoxy derivative 4,4'-[1,2-ethenediylbis({5-[(4-methoxybenzoyl)amino]-2,1phenylene}sulfonylimino)] dibenzoic acid, respectively SD1 and SD4, inhibit DNA binding with 50% inhibition at 20 uM for SD1 and 1.7 uM for SD4. SD1 and SD4 have minimal inhibitory concentrations of 400 and 800 uM on strain H37Ra respectively. In terms of biological role, a nucleoid-associated protein (NAP) that plays a role in local chromosome architecture. Binds DNA non-sequence specifically; in vitro phosphorylation of an N-terminal fragment decreases DNA-binding. Stimulates supercoiling relaxation by topoisomerase 1 (Top1, topA), at higher than 80 uM inhibits relaxation, has no effect on DNA gyrase; the effect is independent of DNA-binding. Increases the intervening strand passage activity of Top1 that occurs between the two catalytic trans-esterification reactions. Does not bind ssDNA, probably helps condense chromosomes. Binds dsDNA; in vitro acetylated protein binds 10-fold less well to DNA (note in vitro acetylated protein is more heavily modified than in vivo modified protein). In vitro acetylated protein compacts DNA less well than unmodified protein. In vitro succinylated DNA bind dsDNA less well than unmodified protein (note in vitro succinylated protein is more heavily modified than in vivo modified protein). Functionally, has ferroxidase activity, converts Fe(2+) into Fe(3+). Binds Fe(3+) but not Fe(2+); prevents the generation of hydroxyl radicals by the Fenton reaction and thus protects DNA from damage. May function in iron storage. Required for biofilm formation; trimethylation by recombinant human SUV39H1 (a histone methyltransferase) inhibits biofilm formation. Probably influences transcription. RNase E and HupB jointly contribute to cellular adaptation to changing growth conditions and survival during antibiotic treatment and in the host. The sequence is that of DNA-binding protein HupB from Mycobacterium tuberculosis (strain ATCC 25177 / H37Ra).